The chain runs to 214 residues: Thiamine-phosphate synthase (214 aa).

Residues Q39–K43 and N71 contribute to the 4-amino-2-methyl-5-(diphosphooxymethyl)pyrimidine site. Mg(2+) is bound by residues D72 and D91. Residue S110 coordinates 4-amino-2-methyl-5-(diphosphooxymethyl)pyrimidine. Position 136–138 (T136–T138) interacts with 2-[(2R,5Z)-2-carboxy-4-methylthiazol-5(2H)-ylidene]ethyl phosphate. Residue K139 coordinates 4-amino-2-methyl-5-(diphosphooxymethyl)pyrimidine. 2-[(2R,5Z)-2-carboxy-4-methylthiazol-5(2H)-ylidene]ethyl phosphate contacts are provided by residues G166 and V186–S187.

This sequence belongs to the thiamine-phosphate synthase family. Requires Mg(2+) as cofactor.

The catalysed reaction is 2-[(2R,5Z)-2-carboxy-4-methylthiazol-5(2H)-ylidene]ethyl phosphate + 4-amino-2-methyl-5-(diphosphooxymethyl)pyrimidine + 2 H(+) = thiamine phosphate + CO2 + diphosphate. The enzyme catalyses 2-(2-carboxy-4-methylthiazol-5-yl)ethyl phosphate + 4-amino-2-methyl-5-(diphosphooxymethyl)pyrimidine + 2 H(+) = thiamine phosphate + CO2 + diphosphate. It carries out the reaction 4-methyl-5-(2-phosphooxyethyl)-thiazole + 4-amino-2-methyl-5-(diphosphooxymethyl)pyrimidine + H(+) = thiamine phosphate + diphosphate. It functions in the pathway cofactor biosynthesis; thiamine diphosphate biosynthesis; thiamine phosphate from 4-amino-2-methyl-5-diphosphomethylpyrimidine and 4-methyl-5-(2-phosphoethyl)-thiazole: step 1/1. Functionally, condenses 4-methyl-5-(beta-hydroxyethyl)thiazole monophosphate (THZ-P) and 2-methyl-4-amino-5-hydroxymethyl pyrimidine pyrophosphate (HMP-PP) to form thiamine monophosphate (TMP). In Hydrogenobaculum sp. (strain Y04AAS1), this protein is Thiamine-phosphate synthase.